We begin with the raw amino-acid sequence, 206 residues long: Small ribosomal subunit protein uS4 (206 aa).

The 61-residue stretch at Gly96 to Lys156 folds into the S4 RNA-binding domain.

Belongs to the universal ribosomal protein uS4 family. Part of the 30S ribosomal subunit. Contacts protein S5. The interaction surface between S4 and S5 is involved in control of translational fidelity.

Its function is as follows. One of the primary rRNA binding proteins, it binds directly to 16S rRNA where it nucleates assembly of the body of the 30S subunit. With S5 and S12 plays an important role in translational accuracy. This Histophilus somni (strain 129Pt) (Haemophilus somnus) protein is Small ribosomal subunit protein uS4.